Consider the following 297-residue polypeptide: Acetyl-coenzyme A carboxylase carboxyl transferase subunit beta (297 aa).

The CoA carboxyltransferase N-terminal domain occupies 27–296; the sequence is LWHKCPACEA…PEQAREAAAV (270 aa). Residues C31, C34, C50, and C53 each coordinate Zn(2+). Residues 31–53 form a C4-type zinc finger; sequence CPACEAVLYRPELEKTLDVCPKC.

The protein belongs to the AccD/PCCB family. In terms of assembly, acetyl-CoA carboxylase is a heterohexamer composed of biotin carboxyl carrier protein (AccB), biotin carboxylase (AccC) and two subunits each of ACCase subunit alpha (AccA) and ACCase subunit beta (AccD). Zn(2+) is required as a cofactor.

It is found in the cytoplasm. The enzyme catalyses N(6)-carboxybiotinyl-L-lysyl-[protein] + acetyl-CoA = N(6)-biotinyl-L-lysyl-[protein] + malonyl-CoA. The protein operates within lipid metabolism; malonyl-CoA biosynthesis; malonyl-CoA from acetyl-CoA: step 1/1. In terms of biological role, component of the acetyl coenzyme A carboxylase (ACC) complex. Biotin carboxylase (BC) catalyzes the carboxylation of biotin on its carrier protein (BCCP) and then the CO(2) group is transferred by the transcarboxylase to acetyl-CoA to form malonyl-CoA. The chain is Acetyl-coenzyme A carboxylase carboxyl transferase subunit beta from Pseudomonas putida (strain W619).